A 520-amino-acid chain; its full sequence is Dual specificity tyrosine-phosphorylation-regulated kinase 4 (520 aa).

The interval 1 to 32 is disordered; the sequence is MPASELKASEIPFHPSIKTQDPKAEEKSPKKQ. The Bipartite nuclear localization signal motif lies at 19 to 37; the sequence is TQDPKAEEKSPKKQKVTLT. Over residues 20-29 the composition is skewed to basic and acidic residues; it reads QDPKAEEKSP. Positions 104 to 400 constitute a Protein kinase domain; sequence YEVLETIGKG…PDQALKHAWI (297 aa). ATP is bound by residues 110-118, Lys-133, and 183-186; these read IGKGSFGQV and FELL. The active-site Proton acceptor is Asp-230. Tyr-264 carries the phosphotyrosine; by autocatalysis modification. A disordered region spans residues 404-467; that stretch reads RNLKPQPRPQ…KHVQHSGDQQ (64 aa). Residues 439–457 show a composition bias toward basic and acidic residues; that stretch reads RKADEITKETTEKTKDSPT.

The protein belongs to the protein kinase superfamily. CMGC Ser/Thr protein kinase family. MNB/DYRK subfamily. Requires Mg(2+) as cofactor. Autophosphorylation on Tyr-264 in the activation loop is required for kinase activity.

It localises to the cytoplasm. The protein localises to the nucleus. The catalysed reaction is L-seryl-[protein] + ATP = O-phospho-L-seryl-[protein] + ADP + H(+). It carries out the reaction L-threonyl-[protein] + ATP = O-phospho-L-threonyl-[protein] + ADP + H(+). It catalyses the reaction L-tyrosyl-[protein] + ATP = O-phospho-L-tyrosyl-[protein] + ADP + H(+). Its function is as follows. Possible non-essential role in spermiogenesis. This Homo sapiens (Human) protein is Dual specificity tyrosine-phosphorylation-regulated kinase 4 (DYRK4).